The chain runs to 468 residues: Methylenetetrahydrofolate--tRNA-(uracil-5-)-methyltransferase TrmFO (468 aa).

Residue 13 to 18 (GGGLAG) coordinates FAD.

This sequence belongs to the MnmG family. TrmFO subfamily. FAD serves as cofactor.

It localises to the cytoplasm. The catalysed reaction is uridine(54) in tRNA + (6R)-5,10-methylene-5,6,7,8-tetrahydrofolate + NADH + H(+) = 5-methyluridine(54) in tRNA + (6S)-5,6,7,8-tetrahydrofolate + NAD(+). It carries out the reaction uridine(54) in tRNA + (6R)-5,10-methylene-5,6,7,8-tetrahydrofolate + NADPH + H(+) = 5-methyluridine(54) in tRNA + (6S)-5,6,7,8-tetrahydrofolate + NADP(+). In terms of biological role, catalyzes the folate-dependent formation of 5-methyl-uridine at position 54 (M-5-U54) in all tRNAs. This chain is Methylenetetrahydrofolate--tRNA-(uracil-5-)-methyltransferase TrmFO, found in Bartonella henselae (strain ATCC 49882 / DSM 28221 / CCUG 30454 / Houston 1) (Rochalimaea henselae).